The primary structure comprises 166 residues: Large ribosomal subunit protein uL10 (166 aa).

Belongs to the universal ribosomal protein uL10 family. As to quaternary structure, part of the ribosomal stalk of the 50S ribosomal subunit. The N-terminus interacts with L11 and the large rRNA to form the base of the stalk. The C-terminus forms an elongated spine to which L12 dimers bind in a sequential fashion forming a multimeric L10(L12)X complex.

Functionally, forms part of the ribosomal stalk, playing a central role in the interaction of the ribosome with GTP-bound translation factors. This chain is Large ribosomal subunit protein uL10, found in Lysinibacillus sphaericus (strain C3-41).